A 210-amino-acid chain; its full sequence is NADH dehydrogenase [ubiquinone] iron-sulfur protein 8, mitochondrial (210 aa).

The transit peptide at 1–34 (MRCLTTPVLLRALAQAARAGPPGGRSLHSSAVAA) directs the protein to the mitochondrion. 4Fe-4S ferredoxin-type domains follow at residues 102-131 (RRYP…IEAE) and 141-170 (TRYD…EGPN). [4Fe-4S] cluster-binding residues include C111, C114, C117, C121, C150, C153, C156, and C160.

This sequence belongs to the complex I 23 kDa subunit family. Core subunit of respiratory chain NADH dehydrogenase (Complex I) which is composed of 45 different subunits. This is a component of the iron-sulfur (IP) fragment of the enzyme. Interacts with RAB5IF. The cofactor is [4Fe-4S] cluster.

Its subcellular location is the mitochondrion inner membrane. It carries out the reaction a ubiquinone + NADH + 5 H(+)(in) = a ubiquinol + NAD(+) + 4 H(+)(out). Functionally, core subunit of the mitochondrial membrane respiratory chain NADH dehydrogenase (Complex I) which catalyzes electron transfer from NADH through the respiratory chain, using ubiquinone as an electron acceptor. Essential for the catalytic activity and assembly of complex I. The polypeptide is NADH dehydrogenase [ubiquinone] iron-sulfur protein 8, mitochondrial (NDUFS8) (Gorilla gorilla gorilla (Western lowland gorilla)).